Consider the following 167-residue polypeptide: Arginine repressor (167 aa).

This sequence belongs to the ArgR family.

It localises to the cytoplasm. It participates in amino-acid biosynthesis; L-arginine biosynthesis [regulation]. Its function is as follows. Regulates arginine biosynthesis genes. The protein is Arginine repressor of Mycobacterium leprae (strain Br4923).